A 62-amino-acid chain; its full sequence is Photosystem II reaction center protein Z (62 aa).

The next 2 helical transmembrane spans lie at 8–28 (AVFA…VVFA) and 41–61 (FSGT…NSLI).

Belongs to the PsbZ family. In terms of assembly, PSII is composed of 1 copy each of membrane proteins PsbA, PsbB, PsbC, PsbD, PsbE, PsbF, PsbH, PsbI, PsbJ, PsbK, PsbL, PsbM, PsbT, PsbY, PsbZ, Psb30/Ycf12, at least 3 peripheral proteins of the oxygen-evolving complex and a large number of cofactors. It forms dimeric complexes.

Its subcellular location is the plastid. It localises to the chloroplast thylakoid membrane. In terms of biological role, may control the interaction of photosystem II (PSII) cores with the light-harvesting antenna, regulates electron flow through the 2 photosystem reaction centers. PSII is a light-driven water plastoquinone oxidoreductase, using light energy to abstract electrons from H(2)O, generating a proton gradient subsequently used for ATP formation. The chain is Photosystem II reaction center protein Z from Oenothera elata subsp. hookeri (Hooker's evening primrose).